The sequence spans 21 residues: Protein IroK (21 aa).

Possible increased expression of this protein (due to mutations upstream of the start codon) is proposed to be responsible for resistance to 3-hydroxypropionic acid (3-HP). The protein is Protein IroK (iroK) of Escherichia coli (strain K12).